A 396-amino-acid polypeptide reads, in one-letter code: Corticosteroid-binding globulin (396 aa).

An N-terminal signal peptide occupies residues methionine 1 to alanine 22. N-linked (GlcNAc...) asparagine glycosylation is found at asparagine 88 and asparagine 216. Position 246 (glutamine 246) interacts with cortisol. Asparagine 252 carries N-linked (GlcNAc...) asparagine glycosylation. Aspartate 278 serves as a coordination point for cortisol. N-linked (GlcNAc...) asparagine glycosylation is found at asparagine 319 and asparagine 352. Tryptophan 384 contacts cortisol.

This sequence belongs to the serpin family. Expressed by the liver; secreted in plasma.

The protein localises to the secreted. Its function is as follows. Major transport protein for glucocorticoids and progestins in the blood of almost all vertebrate species. The chain is Corticosteroid-binding globulin (Serpina6) from Rattus norvegicus (Rat).